The sequence spans 234 residues: Probable plastid-lipid-associated protein 5, chloroplastic (234 aa).

A chloroplast-targeting transit peptide spans 1–45; it reads MALPWCLKTGVLTSPAAGFNHPSDSGFAVPTKLLSIRKGDRERLR.

It belongs to the PAP/fibrillin family.

It localises to the plastid. The protein resides in the chloroplast thylakoid. The sequence is that of Probable plastid-lipid-associated protein 5, chloroplastic (PAP5) from Arabidopsis thaliana (Mouse-ear cress).